Consider the following 368-residue polypeptide: Ribosomal RNA large subunit methyltransferase M (368 aa).

S-adenosyl-L-methionine-binding positions include S189, 222-225, D241, D261, and D278; that span reads CPGG. The active-site Proton acceptor is K307.

It belongs to the class I-like SAM-binding methyltransferase superfamily. RNA methyltransferase RlmE family. RlmM subfamily. In terms of assembly, monomer.

The protein localises to the cytoplasm. It carries out the reaction cytidine(2498) in 23S rRNA + S-adenosyl-L-methionine = 2'-O-methylcytidine(2498) in 23S rRNA + S-adenosyl-L-homocysteine + H(+). In terms of biological role, catalyzes the 2'-O-methylation at nucleotide C2498 in 23S rRNA. This chain is Ribosomal RNA large subunit methyltransferase M, found in Yersinia pestis bv. Antiqua (strain Angola).